Reading from the N-terminus, the 372-residue chain is Homeobox protein Nkx-2.1 (372 aa).

The segment at residues 161-220 (RRKRRVLFSQAQVYELERRFKQQKYLSAPEREHLASMIHLTPTQVKIWFQNHRYKMKRQA) is a DNA-binding region (homeobox). 3 disordered regions span residues 219 to 258 (QAKD…SPRR), 269 to 288 (KPCQ…SHAQ), and 312 to 340 (AGLG…SPAG). Over residues 233-244 (SGGGGGGGGGAG) the composition is skewed to gly residues. Residues 245–254 (CPQQQQAQQQ) show a composition bias toward low complexity. S255 is modified (phosphoserine). Positions 273-288 (AGAPAPGAASLQSHAQ) are enriched in low complexity.

The protein belongs to the NK-2 homeobox family. As to quaternary structure, interacts with WWTR1. Post-translationally, phosphorylated on serine residues by STK3/MST2. As to expression, thyroid, lung and brain.

The protein resides in the nucleus. Functionally, transcription factor that binds and activates the promoter of thyroid specific genes such as thyroglobulin, thyroperoxidase, and thyrotropin receptor. Crucial in the maintenance of the thyroid differentiation phenotype. May play a role in lung development and surfactant homeostasis. Forms a regulatory loop with GRHL2 that coordinates lung epithelial cell morphogenesis and differentiation. Activates the transcription of GNRHR and plays a role in enhancing the circadian oscillation of its gene expression. Represses the transcription of the circadian transcriptional repressor NR1D1. The polypeptide is Homeobox protein Nkx-2.1 (Mus musculus (Mouse)).